Consider the following 361-residue polypeptide: Alanine racemase (361 aa).

Lysine 34 serves as the catalytic Proton acceptor; specific for D-alanine. Residue lysine 34 is modified to N6-(pyridoxal phosphate)lysine. A substrate-binding site is contributed by arginine 129. Tyrosine 254 serves as the catalytic Proton acceptor; specific for L-alanine. Methionine 302 is a binding site for substrate.

Belongs to the alanine racemase family. The cofactor is pyridoxal 5'-phosphate.

It catalyses the reaction L-alanine = D-alanine. It carries out the reaction L-serine = D-serine. The protein operates within amino-acid biosynthesis; D-alanine biosynthesis; D-alanine from L-alanine: step 1/1. In terms of biological role, catalyzes the interconversion of L-alanine and D-alanine. Likely plays an important role in supplying D-alanine, which is an indispensable constituent in the biosynthesis of bacterial cell-wall peptidoglycan. To a lesser extent, is also able to racemize L-serine and D-serine. Does not act on other proteinogenic amino-acids. This Vibrio cholerae serotype O1 (strain ATCC 39315 / El Tor Inaba N16961) protein is Alanine racemase (alr1).